The chain runs to 322 residues: Probable heme-iron transport system permease protein IsdF (322 aa).

A run of 9 helical transmembrane segments spans residues 9-29 (LLFL…FVTG), 61-81 (ILIA…LQAA), 89-109 (ANII…MLFI), 114-134 (FYLP…IILL), 143-163 (VSMI…LEIL), 179-199 (IWSD…LTLL), 233-253 (VFLA…GIIV), 267-287 (VLIP…DLLG), and 294-314 (LEIP…IYLI).

The protein belongs to the binding-protein-dependent transport system permease family. FecCD subfamily.

It is found in the cell membrane. Its function is as follows. Part of the binding-protein-dependent transport system for heme-iron. Responsible for the translocation of the substrate across the membrane. This chain is Probable heme-iron transport system permease protein IsdF (isdF), found in Staphylococcus aureus (strain Mu3 / ATCC 700698).